The following is a 970-amino-acid chain: Sodium/calcium exchanger 1 (970 aa).

The first 32 residues, 1 to 32 (MLRLSLSPTYSLGFHLLAMMTLLISHVDHITA), serve as a signal peptide directing secretion. Over 33 to 71 (ETEMVEEGNETGECTGSYYCKKGVILPIWEPQDPSFGDK) the chain is Extracellular. The N-linked (GlcNAc...) asparagine glycan is linked to Asn41. The chain crosses the membrane as a helical span at residues 72-92 (IARATVYFVAMVYMFLGVSII). Residues 93–133 (ADRFMSSIEVITSQEKEITIKKPNGETTKTTVRIWNETVSN) lie on the Cytoplasmic side of the membrane. Residues 134–154 (LTLMALGSSAPEILLSVIEVC) form a helical membrane-spanning segment. One copy of the Alpha-1 repeat lies at 138-178 (ALGSSAPEILLSVIEVCGHNFTAGDLGPSTIVGSAAFNMFI). Topologically, residues 155-167 (GHNFTAGDLGPST) are extracellular. A glycan (N-linked (GlcNAc...) asparagine) is linked at Asn157. The helical transmembrane segment at 168–188 (IVGSAAFNMFIIIALCVYVVP) threads the bilayer. The Cytoplasmic segment spans residues 189-201 (DGETRKIKHLRVF). The chain crosses the membrane as a helical span at residues 202-222 (FVTAAWSIFAYTWLYIILSVI). Residues 223-228 (SPGVVE) are Extracellular-facing. The chain crosses the membrane as a helical span at residues 229 to 249 (VWEGLLTFFFFPICVVFAWVA). Residues 250 to 797 (DRRLLFYKYV…FVPPTEYWNG (548 aa)) lie on the Cytoplasmic side of the membrane. A putative calmodulin-binding region region spans residues 251 to 270 (RRLLFYKYVYKRYRAGKQRG). A phosphoserine mark is found at Ser282 and Ser389. Calx-beta domains follow at residues 393–493 (VNTE…VHLS) and 524–624 (ATVT…LEIG). Residues Glu417, Asp453, Asp478, Asp479, Ile481, Glu483, Glu486, Asp530, Asp531, Asp532, Glu548, Asp584, Asp610, Glu611, Glu612, and Glu715 each coordinate Ca(2+). The helical transmembrane segment at 798 to 818 (WACFIVSILMIGLLTAFIGDL) threads the bilayer. The Extracellular segment spans residues 819–821 (ASH). Residues 822–842 (FGCTIGLKDSVTAVVFVALGT) traverse the membrane as a helical segment. The stretch at 839-875 (ALGTSVPDTFASKVAATQDQYADASIGNVTGSNAVNV) is one Alpha-2 repeat. Residues 843–871 (SVPDTFASKVAATQDQYADASIGNVTGSN) lie on the Cytoplasmic side of the membrane. A helical transmembrane segment spans residues 872–892 (AVNVFLGIGVAWSIAAIYHAA). The Extracellular segment spans residues 893–903 (NGEQFKVSPGT). A helical transmembrane segment spans residues 904–924 (LAFSVTLFTIFAFINVGVLLY). The Cytoplasmic portion of the chain corresponds to 925–941 (RRRPEIGGELGGPRTAK). The chain crosses the membrane as a helical span at residues 942 to 962 (LLTSCLFVLLWLLYIFFSSLE). The Extracellular segment spans residues 963–970 (AYCHIKGF).

This sequence belongs to the Ca(2+):cation antiporter (CaCA) (TC 2.A.19) family. SLC8 subfamily.

It is found in the cell membrane. The catalysed reaction is Ca(2+)(in) + 3 Na(+)(out) = Ca(2+)(out) + 3 Na(+)(in). Activated by micromolar levels of Ca(2+). In terms of biological role, mediates the exchange of one Ca(2+) ion against three to four Na(+) ions across the cell membrane, and thereby contributes to the regulation of cytoplasmic Ca(2+) levels and Ca(2+)-dependent cellular processes. Contributes to Ca(2+) transport during excitation-contraction coupling in muscle. In a first phase, voltage-gated channels mediate the rapid increase of cytoplasmic Ca(2+) levels due to release of Ca(2+) stores from the endoplasmic reticulum. SLC8A1 mediates the export of Ca(2+) from the cell during the next phase, so that cytoplasmic Ca(2+) levels rapidly return to baseline. Required for normal embryonic heart development and the onset of heart contractions. The chain is Sodium/calcium exchanger 1 (SLC8A1) from Cavia porcellus (Guinea pig).